The following is a 265-amino-acid chain: Glutamate racemase (265 aa).

Substrate-binding positions include 12-13 (DS) and 44-45 (YG). C75 acts as the Proton donor/acceptor in catalysis. 76-77 (NT) lines the substrate pocket. C186 (proton donor/acceptor) is an active-site residue. A substrate-binding site is contributed by 187–188 (TH).

Belongs to the aspartate/glutamate racemases family.

The catalysed reaction is L-glutamate = D-glutamate. It participates in cell wall biogenesis; peptidoglycan biosynthesis. Functionally, provides the (R)-glutamate required for cell wall biosynthesis. The protein is Glutamate racemase of Pseudomonas aeruginosa (strain UCBPP-PA14).